A 199-amino-acid polypeptide reads, in one-letter code: HTH-type transcriptional regulator BetI (199 aa).

Residues 8–68 (EIRKPQLVKA…ETMREILRQL (61 aa)) enclose the HTH tetR-type domain. The H-T-H motif DNA-binding region spans 31 to 50 (SISLISKEAGVSTGIINHYF).

It functions in the pathway amine and polyamine biosynthesis; betaine biosynthesis via choline pathway [regulation]. Repressor involved in the biosynthesis of the osmoprotectant glycine betaine. It represses transcription of the choline transporter BetT and the genes of BetAB involved in the synthesis of glycine betaine. The protein is HTH-type transcriptional regulator BetI of Vibrio parahaemolyticus serotype O3:K6 (strain RIMD 2210633).